Consider the following 378-residue polypeptide: Envelope glycoprotein M (378 aa).

Residues 1 to 16 (MKSSKSDLFIYKTWFK) lie on the Intravirion side of the membrane. Residues 17 to 37 (LLVLYFVMFVLSATVPIAASF) traverse the membrane as a helical segment. Residues 38 to 84 (PGLGFPCYYNALVNYSAINLTERNVAKHLTPTLYLEEPEMFAYMTFT) are Virion surface-facing. Residues 85–105 (FLVDCFAAVYYFLGALAIMLA) form a helical membrane-spanning segment. At 106–118 (KRHFVVSLTTLSQ) the chain is on the intravirion side. Residues 119-139 (WIAMVGTPTLILIGMWRMWTI) form a helical membrane-spanning segment. The Virion surface portion of the chain corresponds to 140–150 (QLFIQTLSYKH). The helical transmembrane segment at 151–171 (IYLSAFVYLIHFLLSFLHTQC) threads the bilayer. Topologically, residues 172 to 210 (YISRNSQLWSLKVLEQGIPPNTLLDTVVFTIKPLLANCQ) are intravirion. A helical transmembrane segment spans residues 211-231 (LFCLGLEMLVFSLSFMMAIGN). At 232–239 (SFYVLVSD) the chain is on the virion surface side. The helical transmembrane segment at 240–260 (IVFGAINLYLALVLFWVLLTE) threads the bilayer. Residues 261 to 268 (LYLVKYMT) lie on the Intravirion side of the membrane. The chain crosses the membrane as a helical span at residues 269-289 (FVMGFYLGGLIGCIFLLVPLW). Topologically, residues 290-303 (RYEQIFVAANLRSP) are virion surface. Residues 304–324 (ILINILVIFFLCTLSALVRLL) traverse the membrane as a helical segment. Residues 325-378 (RMTWFSPTKPSYEPIQLKNIKHRRVKLQSPSGPSILEEGSSDEGSEDSEEEEEL) lie on the Intravirion side of the membrane. Positions 347-378 (RRVKLQSPSGPSILEEGSSDEGSEDSEEEEEL) are disordered. The segment covering 363-378 (GSSDEGSEDSEEEEEL) has biased composition (acidic residues).

This sequence belongs to the herpesviridae glycoprotein M family. Interacts (via N-terminus) with gN (via N-terminus). The gM-gN heterodimer forms the gCII complex.

The protein resides in the virion membrane. Its subcellular location is the host Golgi apparatus. The protein localises to the host trans-Golgi network. It localises to the host endosome membrane. It is found in the host nucleus inner membrane. In terms of biological role, envelope glycoprotein important for virion assembly and egress. Plays a role in the correct incorporation of gH-gL into virion membrane. Directs the glycoprotein N (gN) to the host trans-Golgi network. The protein is Envelope glycoprotein M of Equus caballus (Horse).